A 289-amino-acid chain; its full sequence is Purine nucleoside phosphorylase (289 aa).

Methionine 1 bears the N-acetylmethionine mark. Residues serine 33, histidine 64, and 84-86 contribute to the phosphate site; that span reads RFH. A purine D-ribonucleoside is bound at residue tyrosine 88. Alanine 116 is a phosphate binding site. Positions 201 and 219 each coordinate a purine D-ribonucleoside. Phosphate is bound at residue serine 220. Asparagine 243 lines the a purine D-ribonucleoside pocket. Phosphoserine is present on serine 251. Histidine 257 lines the a purine D-ribonucleoside pocket.

It belongs to the PNP/MTAP phosphorylase family. In terms of assembly, homotrimer. Expressed in red blood cells; overexpressed in red blood cells (cytoplasm) of patients with hereditary non-spherocytic hemolytic anemia of unknown etiology.

The protein resides in the cytoplasm. It carries out the reaction inosine + phosphate = alpha-D-ribose 1-phosphate + hypoxanthine. The enzyme catalyses guanosine + phosphate = alpha-D-ribose 1-phosphate + guanine. It catalyses the reaction 2'-deoxyguanosine + phosphate = 2-deoxy-alpha-D-ribose 1-phosphate + guanine. The catalysed reaction is 2'-deoxyinosine + phosphate = 2-deoxy-alpha-D-ribose 1-phosphate + hypoxanthine. It participates in purine metabolism; purine nucleoside salvage. With respect to regulation, inhibited by 5'-deaza-1'-aza-2c-deoxy-1'-(9-methylene)-Immucilin-G (DADMe-ImmG). Functionally, catalyzes the phosphorolytic breakdown of the N-glycosidic bond in the beta-(deoxy)ribonucleoside molecules, with the formation of the corresponding free purine bases and pentose-1-phosphate. Preferentially acts on 6-oxopurine nucleosides including inosine and guanosine. The protein is Purine nucleoside phosphorylase (PNP) of Homo sapiens (Human).